The primary structure comprises 231 residues: Probable transaldolase (231 aa).

Catalysis depends on Lys83, which acts as the Schiff-base intermediate with substrate.

This sequence belongs to the transaldolase family. Type 3B subfamily.

The protein localises to the cytoplasm. It catalyses the reaction D-sedoheptulose 7-phosphate + D-glyceraldehyde 3-phosphate = D-erythrose 4-phosphate + beta-D-fructose 6-phosphate. Its pathway is carbohydrate degradation; pentose phosphate pathway; D-glyceraldehyde 3-phosphate and beta-D-fructose 6-phosphate from D-ribose 5-phosphate and D-xylulose 5-phosphate (non-oxidative stage): step 2/3. Functionally, transaldolase is important for the balance of metabolites in the pentose-phosphate pathway. This Rhodospirillum centenum (strain ATCC 51521 / SW) protein is Probable transaldolase.